The chain runs to 995 residues: Epididymis-specific alpha-mannosidase (995 aa).

The N-terminal stretch at 1-21 is a signal peptide; it reads MGPHSWLPLFMQLALLGPQWA. Zn(2+) is bound by residues H36, D38, and D151. D151 (nucleophile) is an active-site residue. A glycan (N-linked (GlcNAc...) asparagine) is linked at N285. Residue H411 participates in Zn(2+) binding. N593, N625, N657, N733, N793, N875, and N977 each carry an N-linked (GlcNAc...) asparagine glycan. The interval 956–977 is disordered; the sequence is TEDGHHHRGSSRRPLPPLRGPN.

The protein belongs to the glycosyl hydrolase 38 family. Zn(2+) is required as a cofactor. In terms of processing, processed into a 27 kDa fragment localized on the equatorial segment and the apical rim of the head of mature sperm. In terms of tissue distribution, specific to the caput and corpus of the epididymis.

It is found in the secreted. The catalysed reaction is Hydrolysis of terminal, non-reducing alpha-D-mannose residues in alpha-D-mannosides.. In terms of biological role, can digest both p-nitro-phenyl-alpha-D-mannoside and high mannose oligosaccharide (Man(8)-GlcNAc(2)). May be involved in sperm maturation. Has a possible role in specific sperm-egg interaction since sperm surface mannosidase acts like a receptor for mannose-containing oligosaccharides located on the zona pellucida. The polypeptide is Epididymis-specific alpha-mannosidase (MAN2B2) (Sus scrofa (Pig)).